The following is a 565-amino-acid chain: uncharacterized protein (565 aa).

The next 5 helical transmembrane spans lie at 4 to 26, 33 to 55, 68 to 90, 97 to 119, and 162 to 184; these read FVQFLGSNPYILLFLTIGLAVWV, GYGLGAVAAAIVVGCLVATVGAA, SLLYYLFMYGVGLRVGPSFVNAL, YAILAIIAPILGLAIVVLGTQFF, and ISAMIALSYGITYIWGTVGIILL. RCK C-terminal domains lie at 210-295 and 296-379; these read PNVD…LGPE and VPDA…IFGV. 5 helical membrane-spanning segments follow: residues 389-411, 415-432, 453-472, 482-504, and 539-561; these read LLTLSFGMILGFLIGLIEVPAFG, GLGNAGGLLLSGIIVSSI, LGLIGFVAIVGINAGADLLT, IFIVGFLASTIPPIIVWAIGFHI, and WLGFPVGYAVSGVLLTVFGYFAM.

The protein belongs to the AAE transporter (TC 2.A.81) family.

The protein resides in the cell membrane. This is an uncharacterized protein from Bordetella bronchiseptica (strain ATCC BAA-588 / NCTC 13252 / RB50) (Alcaligenes bronchisepticus).